The sequence spans 375 residues: 4,4'-diaponeurosporenoate glycosyltransferase (375 aa).

4 consecutive transmembrane segments (helical) span residues 3-23 (WLSR…ALIF), 164-184 (FYEG…NVFS), 277-297 (IMTA…GLCL), and 330-350 (FSNL…KIFI).

It belongs to the glycosyltransferase 2 family. CrtQ subfamily.

Its subcellular location is the cell membrane. It participates in carotenoid biosynthesis; staphyloxanthin biosynthesis; staphyloxanthin from farnesyl diphosphate: step 4/5. Its function is as follows. Catalyzes the glycosylation of 4,4'-diaponeurosporenoate, i.e. the esterification of glucose at the C1'' position with the carboxyl group of 4,4'-diaponeurosporenic acid, to form glycosyl-4,4'-diaponeurosporenoate. This is a step in the biosynthesis of staphyloxanthin, an orange pigment present in most staphylococci strains. The protein is 4,4'-diaponeurosporenoate glycosyltransferase (crtQ) of Staphylococcus aureus (strain Mu50 / ATCC 700699).